Consider the following 319-residue polypeptide: Annexin A4 (319 aa).

A2 carries the post-translational modification N-acetylalanine. T7 is subject to Phosphothreonine; by PKC. Residue S12 is modified to Phosphoserine. Annexin repeat units lie at residues 14–85, 86–157, 169–241, and 245–316; these read FNAA…GMMT, PTVL…SLSA, ALVR…AIVK, and NKSA…ILCG. 3 positions are modified to N6-acetyllysine: K213, K293, and K300.

It belongs to the annexin family. Monomer.

Its subcellular location is the zymogen granule membrane. In terms of biological role, calcium/phospholipid-binding protein which promotes membrane fusion and is involved in exocytosis. This is Annexin A4 (ANXA4) from Sus scrofa (Pig).